Here is a 360-residue protein sequence, read N- to C-terminus: Probable CCR4-associated factor 1 homolog 1 (360 aa).

The a divalent metal cation site is built by D37, E39, D155, and D226.

Belongs to the CAF1 family. In terms of assembly, component of the CCR4-NOT complex, at least composed of CRR4 and CAF1 proteins. The cofactor is a divalent metal cation.

It is found in the nucleus. The protein localises to the cytoplasm. The enzyme catalyses Exonucleolytic cleavage of poly(A) to 5'-AMP.. In terms of biological role, ubiquitous transcription factor required for a diverse set of processes. It is a component of the CCR4 complex involved in the control of gene expression. The chain is Probable CCR4-associated factor 1 homolog 1 (CAF1-1) from Arabidopsis thaliana (Mouse-ear cress).